The following is a 325-amino-acid chain: Intelectin-2 (325 aa).

A signal peptide spans 1 to 26 (MLSMLRTMTRLCFLLFFSVATSGCSA). Residues 44-267 (FSFSSLPRSC…AANALCAGIK (224 aa)) form the Fibrinogen C-terminal domain. Cysteine 53 and cysteine 82 are joined by a disulfide. The Ca(2+) site is built by histidine 98, glutamate 99, aspartate 101, glycine 104, glycine 109, aspartate 110, and aspartate 145. 3 disulfides stabilise this stretch: cysteine 106–cysteine 292, cysteine 211–cysteine 271, and cysteine 263–cysteine 277. The Ca(2+) site is built by asparagine 272, glutamate 274, and aspartate 294. A carbohydrate is bound at residue 274-275 (EH).

In terms of tissue distribution, expressed only in the small intestine.

The protein localises to the secreted. Its function is as follows. May play a role in the defense system against pathogens. The protein is Intelectin-2 (ITLN2) of Homo sapiens (Human).